Reading from the N-terminus, the 230-residue chain is Orotidine 5'-phosphate decarboxylase (230 aa).

Residues Asp11, Lys34, Asp61–Thr70, Thr117, Arg179, Gln188, Gly208, and Arg209 contribute to the substrate site. Residue Lys63 is the Proton donor of the active site.

Belongs to the OMP decarboxylase family. Type 1 subfamily. In terms of assembly, homodimer.

It carries out the reaction orotidine 5'-phosphate + H(+) = UMP + CO2. It participates in pyrimidine metabolism; UMP biosynthesis via de novo pathway; UMP from orotate: step 2/2. Its function is as follows. Catalyzes the decarboxylation of orotidine 5'-monophosphate (OMP) to uridine 5'-monophosphate (UMP). This Streptococcus sanguinis (strain SK36) protein is Orotidine 5'-phosphate decarboxylase.